We begin with the raw amino-acid sequence, 136 residues long: Purkinje cell protein 2 homolog (136 aa).

2 disordered regions span residues 1–64 (MMDQ…PEMD) and 86–136 (SSLP…TQAP). The region spanning 23–45 (QEGFFNLLSHVQGDRMEGQRCSL) is the GoLoco 1 domain. Polar residues predominate over residues 49-59 (PGQTTKSQSDP). Residues 63–85 (MDSLMDMLASTQGRRMDDQRVTV) enclose the GoLoco 2 domain. Residues 107-117 (LSPQPLLTPQD) show a composition bias toward polar residues. Position 127 is a phosphoserine (serine 127).

In terms of biological role, may function as a cell-type specific modulator for G protein-mediated cell signaling. The polypeptide is Purkinje cell protein 2 homolog (PCP2) (Homo sapiens (Human)).